The following is a 293-amino-acid chain: tRNA pseudouridine synthase B (293 aa).

The active-site Nucleophile is Asp-39.

The protein belongs to the pseudouridine synthase TruB family. Type 1 subfamily.

The catalysed reaction is uridine(55) in tRNA = pseudouridine(55) in tRNA. Responsible for synthesis of pseudouridine from uracil-55 in the psi GC loop of transfer RNAs. This Streptococcus thermophilus (strain CNRZ 1066) protein is tRNA pseudouridine synthase B.